The following is an 87-amino-acid chain: Cell division topological specificity factor (87 aa).

Belongs to the MinE family.

In terms of biological role, prevents the cell division inhibition by proteins MinC and MinD at internal division sites while permitting inhibition at polar sites. This ensures cell division at the proper site by restricting the formation of a division septum at the midpoint of the long axis of the cell. The sequence is that of Cell division topological specificity factor from Neisseria meningitidis serogroup C (strain 053442).